The following is a 256-amino-acid chain: uncharacterized protein (256 aa).

A signal peptide spans 1–24; that stretch reads MIKRVNKLVLGISFLFLIISIFAG. Cys-25 carries the N-palmitoyl cysteine lipid modification. Cys-25 carries the S-diacylglycerol cysteine lipid modification.

This sequence belongs to the staphylococcal tandem lipoprotein family.

It is found in the cell membrane. This is an uncharacterized protein from Staphylococcus aureus (strain Mu50 / ATCC 700699).